The following is a 1054-amino-acid chain: DIS3-like exonuclease 1 (1054 aa).

Positions 236-313 (AGIKSGRYIQ…WKGRTAALCE (78 aa)) constitute a CSD1 domain. The disordered stretch occupies residues 313-332 (ENDSEDKASGESPSEPMPTG). In terms of domain architecture, CSD2 spans 365–431 (ILVTPWDYRI…GEIATILVEN (67 aa)). Residues 465–816 (RRDLRSTHLV…VHRLLMAAIS (352 aa)) form the RNB domain. The residue at position 989 (S989) is a Phosphoserine.

The protein belongs to the RNR ribonuclease family. In terms of assembly, component of the RNA exosome complex. The catalytically inactive RNA exosome core (Exo-9) complex is believed to associate with catalytic subunits EXOSC10, and DIS3 or DIS3L in cytoplasmic- and nuclear-specific RNA exosome complex forms. The cofactor is Mg(2+).

It localises to the cytoplasm. It carries out the reaction Exonucleolytic cleavage in the 3'- to 5'-direction to yield nucleoside 5'-phosphates.. Functionally, catalytic component of the RNA exosome complex which has 3'-&gt;5' exoribonuclease activity and participates in a multitude of cellular RNA processing and degradation events. In the cytoplasm, the RNA exosome complex is involved in general mRNA turnover and specifically degrades inherently unstable mRNAs containing AU-rich elements (AREs) within their 3' untranslated regions, and in RNA surveillance pathways, preventing translation of aberrant mRNAs. It seems to be involved in degradation of histone mRNA. The protein is DIS3-like exonuclease 1 (Dis3l) of Rattus norvegicus (Rat).